A 532-amino-acid polypeptide reads, in one-letter code: Cytochrome P450 12b1, mitochondrial (532 aa).

Cysteine 480 serves as a coordination point for heme.

The protein belongs to the cytochrome P450 family. It depends on heme as a cofactor.

The protein localises to the mitochondrion. In terms of biological role, probably involved in steroid hormones biosynthesis. This Drosophila acanthoptera (Fruit fly) protein is Cytochrome P450 12b1, mitochondrial (Cyp12b1).